The sequence spans 517 residues: Histone H4 transcription factor (517 aa).

3 consecutive C2H2-type zinc fingers follow at residues 15–39 (LQCE…VTQH), 129–153 (FLCL…VEAH), and 169–193 (VLCG…LRSH). The C2H2-type 4; degenerate zinc finger occupies 199–221 (VACPTCGGMFANNTKFLDHIRRQ). 5 consecutive C2H2-type zinc fingers follow at residues 229 to 251 (FQCS…MRNH), 255 to 278 (YKCP…RFRH), 284 to 306 (FKCD…LDTH), 312 to 337 (YRCD…RKVH), and 345 to 368 (YKCH…RKKH). The interval 373 to 517 (PSGHPRFRYK…IAEEPEIQMV (145 aa)) is interaction with NPAT. A required for activation of histone H4 transcription and contributes to DNA-binding region spans residues 374–407 (SGHPRFRYKEHEDGYMRLQLVRYESVELTQQLLR). Positions 431-460 (TVPGEPGRKEEEEEGKGSEGTALSASQDNP) are disordered. Over residues 451-460 (TALSASQDNP) the composition is skewed to polar residues.

In terms of assembly, binds MBD2 and a histone deacetylase complex. Interacts with NPAT. Ubiquitinated. Ubiquitination may lead to proteasome-mediated degradation. As to expression, ubiquitous. Highly expressed in brain, heart, skeletal muscle, spleen, kidney, small intestine, placenta and liver.

Its subcellular location is the nucleus. Transcriptional repressor that binds to the consensus sequence 5'-CGGACGTT-3' and to the RB1 promoter. Transcriptional activator that promotes histone H4 gene transcription at the G1/S phase transition in conjunction with NPAT. Also activates transcription of the ATM and PRKDC genes. Autoregulates its expression by associating with its own promoter. The sequence is that of Histone H4 transcription factor (HINFP) from Homo sapiens (Human).